Consider the following 553-residue polypeptide: Vacuolar fusion protein MON1 homolog B (553 aa).

M1 bears the N-acetylmethionine mark. 2 disordered regions span residues 1-111 and 534-553; these read MEAG…DEDW and STPPSTSADQAPNNGLFTGL. A compositionally biased stretch (basic and acidic residues) spans 23–35; that stretch reads FPREEAGDSERVH. Residues 52–72 are compositionally biased toward polar residues; that stretch reads KDQPSSLLSPLPQTEAASSTC. A Phosphoserine modification is found at S57. The segment covering 78 to 95 has biased composition (low complexity); sequence AAASDSSPPGEPESNSEG. The span at 96-108 shows a compositional bias: acidic residues; the sequence is QGEDPDDGGDPSD. A compositionally biased stretch (polar residues) spans 541-553; sequence ADQAPNNGLFTGL.

It belongs to the MON1/SAND family. As to quaternary structure, interacts with CCNT2; down-regulates CCNT2-mediated activation of viral promoters during herpes simplex virus 1/HHV-1 infection. Found in a complex with RMC1, CCZ1 MON1A and MON1B.

This is Vacuolar fusion protein MON1 homolog B (Mon1b) from Mus musculus (Mouse).